The chain runs to 275 residues: 2,3,4,5-tetrahydropyridine-2,6-dicarboxylate N-succinyltransferase (275 aa).

The protein belongs to the transferase hexapeptide repeat family.

The protein resides in the cytoplasm. It catalyses the reaction (S)-2,3,4,5-tetrahydrodipicolinate + succinyl-CoA + H2O = (S)-2-succinylamino-6-oxoheptanedioate + CoA. The protein operates within amino-acid biosynthesis; L-lysine biosynthesis via DAP pathway; LL-2,6-diaminopimelate from (S)-tetrahydrodipicolinate (succinylase route): step 1/3. The polypeptide is 2,3,4,5-tetrahydropyridine-2,6-dicarboxylate N-succinyltransferase (Paraburkholderia phymatum (strain DSM 17167 / CIP 108236 / LMG 21445 / STM815) (Burkholderia phymatum)).